Consider the following 846-residue polypeptide: DNA mismatch repair protein MutS (846 aa).

Residue 610 to 617 coordinates ATP; that stretch reads GPNMGGKS.

The protein belongs to the DNA mismatch repair MutS family.

This protein is involved in the repair of mismatches in DNA. It is possible that it carries out the mismatch recognition step. This protein has a weak ATPase activity. This is DNA mismatch repair protein MutS from Legionella pneumophila (strain Lens).